The sequence spans 192 residues: Erythropoietin (192 aa).

An N-terminal signal peptide occupies residues methionine 1 to cysteine 26. The cysteines at positions 33 and 187 are disulfide-linked. N-linked (GlcNAc...) asparagine glycans are attached at residues asparagine 50, asparagine 64, and asparagine 109.

Belongs to the EPO/TPO family. In terms of tissue distribution, produced by kidney or liver of adult mammals and by liver of fetal or neonatal mammals.

It localises to the secreted. In terms of biological role, hormone involved in the regulation of erythrocyte proliferation and differentiation and the maintenance of a physiological level of circulating erythrocyte mass. Binds to EPOR leading to EPOR dimerization and JAK2 activation thereby activating specific downstream effectors, including STAT1 and STAT3. This is Erythropoietin (EPO) from Alexandromys oeconomus (Tundra vole).